Consider the following 821-residue polypeptide: Leucine--tRNA ligase (821 aa).

The 'HIGH' region motif lies at 42 to 52; it reads PYPSGKLHMGH. The short motif at 583 to 587 is the 'KMSKS' region element; sequence KMSKS. Position 586 (Lys-586) interacts with ATP.

It belongs to the class-I aminoacyl-tRNA synthetase family.

It is found in the cytoplasm. It catalyses the reaction tRNA(Leu) + L-leucine + ATP = L-leucyl-tRNA(Leu) + AMP + diphosphate. The protein is Leucine--tRNA ligase of Carboxydothermus hydrogenoformans (strain ATCC BAA-161 / DSM 6008 / Z-2901).